Here is a 159-residue protein sequence, read N- to C-terminus: SsrA-binding protein (159 aa).

It belongs to the SmpB family.

It localises to the cytoplasm. Required for rescue of stalled ribosomes mediated by trans-translation. Binds to transfer-messenger RNA (tmRNA), required for stable association of tmRNA with ribosomes. tmRNA and SmpB together mimic tRNA shape, replacing the anticodon stem-loop with SmpB. tmRNA is encoded by the ssrA gene; the 2 termini fold to resemble tRNA(Ala) and it encodes a 'tag peptide', a short internal open reading frame. During trans-translation Ala-aminoacylated tmRNA acts like a tRNA, entering the A-site of stalled ribosomes, displacing the stalled mRNA. The ribosome then switches to translate the ORF on the tmRNA; the nascent peptide is terminated with the 'tag peptide' encoded by the tmRNA and targeted for degradation. The ribosome is freed to recommence translation, which seems to be the essential function of trans-translation. This chain is SsrA-binding protein, found in Acidothermus cellulolyticus (strain ATCC 43068 / DSM 8971 / 11B).